We begin with the raw amino-acid sequence, 397 residues long: Dual specificity mitogen-activated protein kinase kinase 4 (397 aa).

The interval 1–38 (MAAPSPSGGGGSGGGGGTPGPIGPPASGHPAVSSMQGK) is disordered. An N-acetylalanine modification is found at Ala-2. A compositionally biased stretch (gly residues) spans 7-20 (SGGGGSGGGGGTPG). The segment at 35–50 (MQGKRKALKLNFANPP) is d domain. Arg-56 carries the asymmetric dimethylarginine; alternate modification. Omega-N-methylarginine; alternate is present on Arg-56. Phosphoserine is present on Ser-88. Residues 100–366 (LKDLGEIGRG…KELLKHPFIL (267 aa)) enclose the Protein kinase domain. Residues 106–114 (IGRGAYGSV) and Lys-129 contribute to the ATP site. Asp-227 (proton acceptor) is an active-site residue. Ser-255 carries the post-translational modification Phosphoserine. A Phosphothreonine modification is found at Thr-259. The DVD domain stretch occupies residues 362–385 (HPFILMYEERTVEVACYVCKILDQ).

Belongs to the protein kinase superfamily. STE Ser/Thr protein kinase family. MAP kinase kinase subfamily. In terms of assembly, interacts with SPAG9. Interacts (via its D domain) with its substrates MAPK8/JNK1, MAPK9/JNK2, MAPK10/JNK3, MAPK11 and MAPK14. Interacts (via its DVD domain) with MAP3Ks activators like MAP3K1/MEKK1 and MAP3K11/MLK3. Interacts with ARRB1, ARRB2 and MAPK8IP3/JIP3. In terms of processing, activated by phosphorylation on Ser-255 and Thr-259 by MAP kinase kinase kinases (MAP3Ks). In terms of tissue distribution, strong expression is detected in most of the central nervous system and in liver and thymus during early stages of development. While expression in nervous system increases over time, expression in fetal liver and thymus gradually decreases as embryogenesis proceeds. High level of expression in the central nervous system persists throughout postnatal development and remained at a stable level in adult brain.

The protein localises to the cytoplasm. The protein resides in the nucleus. It carries out the reaction L-seryl-[protein] + ATP = O-phospho-L-seryl-[protein] + ADP + H(+). The catalysed reaction is L-threonyl-[protein] + ATP = O-phospho-L-threonyl-[protein] + ADP + H(+). It catalyses the reaction L-tyrosyl-[protein] + ATP = O-phospho-L-tyrosyl-[protein] + ADP + H(+). With respect to regulation, activated in response to a variety of cellular stresses, including UV and gamma-irradiation, heat shock, hyperosmolarity, T-cell receptor stimulation, peroxide and inflammatory cytokines. Also activated by developmental cues. MAP2K4/MKK4 is activated by the majority of MKKKs, such as MAP3K5/ASK1, MAP3K1/MEKK1, MAP3K7/TAK1, MAP3K10/MLK2, MAP3K11/MLK3, MAP3K12/DLK and MAP3K13/LZK. In terms of biological role, dual specificity protein kinase which acts as an essential component of the MAP kinase signal transduction pathway. Essential component of the stress-activated protein kinase/c-Jun N-terminal kinase (SAP/JNK) signaling pathway. With MAP2K7/MKK7, is the one of the only known kinase to directly activate the stress-activated protein kinase/c-Jun N-terminal kinases MAPK8/JNK1, MAPK9/JNK2 and MAPK10/JNK3. MAP2K4/MKK4 and MAP2K7/MKK7 both activate the JNKs by phosphorylation, but they differ in their preference for the phosphorylation site in the Thr-Pro-Tyr motif. MAP2K4 shows preference for phosphorylation of the Tyr residue and MAP2K7/MKK7 for the Thr residue. The phosphorylation of the Thr residue by MAP2K7/MKK7 seems to be the prerequisite for JNK activation at least in response to pro-inflammatory cytokines, while other stimuli activate both MAP2K4/MKK4 and MAP2K7/MKK7 which synergistically phosphorylate JNKs. MAP2K4 is required for maintaining peripheral lymphoid homeostasis. The MKK/JNK signaling pathway is also involved in mitochondrial death signaling pathway, including the release cytochrome c, leading to apoptosis. Whereas MAP2K7/MKK7 exclusively activates JNKs, MAP2K4/MKK4 additionally activates the p38 MAPKs MAPK11, MAPK12, MAPK13 and MAPK14. The polypeptide is Dual specificity mitogen-activated protein kinase kinase 4 (Map2k4) (Mus musculus (Mouse)).